The chain runs to 503 residues: D-alanine--D-alanyl carrier protein ligase (503 aa).

151–152 (TS) contacts ATP. Position 196 (Asp196) interacts with D-alanine. 291 to 296 (NTYGPT) lines the ATP pocket. D-alanine is bound at residue Val300. Residues Asp382 and Lys491 each coordinate ATP. Lys491 is a binding site for D-alanine.

The protein belongs to the ATP-dependent AMP-binding enzyme family. DltA subfamily.

The protein resides in the cytoplasm. The catalysed reaction is holo-[D-alanyl-carrier protein] + D-alanine + ATP = D-alanyl-[D-alanyl-carrier protein] + AMP + diphosphate. The protein operates within cell wall biogenesis; lipoteichoic acid biosynthesis. In terms of biological role, catalyzes the first step in the D-alanylation of lipoteichoic acid (LTA), the activation of D-alanine and its transfer onto the D-alanyl carrier protein (Dcp) DltC. In an ATP-dependent two-step reaction, forms a high energy D-alanyl-AMP intermediate, followed by transfer of the D-alanyl residue as a thiol ester to the phosphopantheinyl prosthetic group of the Dcp. D-alanylation of LTA plays an important role in modulating the properties of the cell wall in Gram-positive bacteria, influencing the net charge of the cell wall. This Bacillus velezensis (strain DSM 23117 / BGSC 10A6 / LMG 26770 / FZB42) (Bacillus amyloliquefaciens subsp. plantarum) protein is D-alanine--D-alanyl carrier protein ligase.